A 368-amino-acid polypeptide reads, in one-letter code: Galactoside 2-alpha-L-fucosyltransferase SEC1 (368 aa).

Residues 1–20 form a disordered region; it reads MWDMRAVAPQRPAAGHPRAG. Residues 1–31 lie on the Cytoplasmic side of the membrane; sequence MWDMRAVAPQRPAAGHPRAGWPRKLKTAATR. The helical transmembrane segment at 32-52 threads the bilayer; it reads FWATCPSSSTVCFLFVIFAVS. Over 53-368 the chain is Lumenal; it reads TVFHCHRRLA…NLGQARESHP (316 aa).

Belongs to the glycosyltransferase 11 family. Kidney.

Its subcellular location is the golgi apparatus. The protein localises to the golgi stack membrane. It carries out the reaction a ganglioside GM1 + GDP-beta-L-fucose = a ganglioside Fuc-GM1 + GDP + H(+). It participates in protein modification; protein glycosylation. Its function is as follows. Catalyzes the transfer of alpha 1,2-linked fucose to ganglioside GM1 and galacto-N-biose. This is Galactoside 2-alpha-L-fucosyltransferase SEC1 from Bos taurus (Bovine).